Reading from the N-terminus, the 158-residue chain is Crossover junction endodeoxyribonuclease RuvC (158 aa).

Residues D7, E66, and D139 contribute to the active site. Residues D7, E66, and D139 each contribute to the Mg(2+) site.

This sequence belongs to the RuvC family. In terms of assembly, homodimer which binds Holliday junction (HJ) DNA. The HJ becomes 2-fold symmetrical on binding to RuvC with unstacked arms; it has a different conformation from HJ DNA in complex with RuvA. In the full resolvosome a probable DNA-RuvA(4)-RuvB(12)-RuvC(2) complex forms which resolves the HJ. The cofactor is Mg(2+).

It localises to the cytoplasm. The enzyme catalyses Endonucleolytic cleavage at a junction such as a reciprocal single-stranded crossover between two homologous DNA duplexes (Holliday junction).. The RuvA-RuvB-RuvC complex processes Holliday junction (HJ) DNA during genetic recombination and DNA repair. Endonuclease that resolves HJ intermediates. Cleaves cruciform DNA by making single-stranded nicks across the HJ at symmetrical positions within the homologous arms, yielding a 5'-phosphate and a 3'-hydroxyl group; requires a central core of homology in the junction. The consensus cleavage sequence is 5'-(A/T)TT(C/G)-3'. Cleavage occurs on the 3'-side of the TT dinucleotide at the point of strand exchange. HJ branch migration catalyzed by RuvA-RuvB allows RuvC to scan DNA until it finds its consensus sequence, where it cleaves and resolves the cruciform DNA. This Campylobacter jejuni subsp. jejuni serotype O:6 (strain 81116 / NCTC 11828) protein is Crossover junction endodeoxyribonuclease RuvC.